The chain runs to 840 residues: Protein HIR1 (840 aa).

WD repeat units lie at residues 15-54, 72-111, 129-168, 171-210, 224-267, 292-336, and 340-381; these read SRDYEIYTVDVSPDGKRVATGGLDGKIRIWSVDALVSAAA, RHTGSVTCVKFSPDGNYLASGSDDRILLIWAMDEENHGGS, AHDNDIQDICWAPDSSILVTVGLDRSVIVWNGLNFERLKR, VHQSLVKGVIFDPANKYFATASDDRTMRVFRYHKTGEVSF, PLTT…SSIS, KAKN…PIFV, and IAQK…MPIP.

This sequence belongs to the WD repeat HIR1 family.

Its subcellular location is the nucleus. Functionally, required for replication-independent chromatin assembly and for the periodic repression of histone gene transcription during the cell cycle. This chain is Protein HIR1 (HIR1), found in Candida glabrata (strain ATCC 2001 / BCRC 20586 / JCM 3761 / NBRC 0622 / NRRL Y-65 / CBS 138) (Yeast).